The primary structure comprises 657 residues: 1-deoxy-D-xylulose-5-phosphate synthase (657 aa).

Histidine 73 is a thiamine diphosphate binding site. Positions 91-110 (RQEGGMSGYPDRGESEHDIV) are disordered. Positions 101–110 (DRGESEHDIV) are enriched in basic and acidic residues. 113–115 (SHA) contacts thiamine diphosphate. Mg(2+) is bound at residue aspartate 145. Thiamine diphosphate is bound by residues 146 to 147 (GA), asparagine 175, tyrosine 293, and glutamate 375. Position 175 (asparagine 175) interacts with Mg(2+).

This sequence belongs to the transketolase family. DXPS subfamily. In terms of assembly, homodimer. It depends on Mg(2+) as a cofactor. Thiamine diphosphate is required as a cofactor.

The catalysed reaction is D-glyceraldehyde 3-phosphate + pyruvate + H(+) = 1-deoxy-D-xylulose 5-phosphate + CO2. It participates in metabolic intermediate biosynthesis; 1-deoxy-D-xylulose 5-phosphate biosynthesis; 1-deoxy-D-xylulose 5-phosphate from D-glyceraldehyde 3-phosphate and pyruvate: step 1/1. Catalyzes the acyloin condensation reaction between C atoms 2 and 3 of pyruvate and glyceraldehyde 3-phosphate to yield 1-deoxy-D-xylulose-5-phosphate (DXP). This chain is 1-deoxy-D-xylulose-5-phosphate synthase, found in Arthrobacter sp. (strain FB24).